Reading from the N-terminus, the 479-residue chain is ATP synthase subunit beta (479 aa).

Residue 153-160 participates in ATP binding; it reads GGAGVGKT.

Belongs to the ATPase alpha/beta chains family. As to quaternary structure, F-type ATPases have 2 components, CF(1) - the catalytic core - and CF(0) - the membrane proton channel. CF(1) has five subunits: alpha(3), beta(3), gamma(1), delta(1), epsilon(1). CF(0) has three main subunits: a(1), b(2) and c(9-12). The alpha and beta chains form an alternating ring which encloses part of the gamma chain. CF(1) is attached to CF(0) by a central stalk formed by the gamma and epsilon chains, while a peripheral stalk is formed by the delta and b chains.

The protein resides in the cell membrane. It catalyses the reaction ATP + H2O + 4 H(+)(in) = ADP + phosphate + 5 H(+)(out). Its activity is regulated as follows. Increases 2-fold following exposure to low pH. Functionally, produces ATP from ADP in the presence of a proton gradient across the membrane. The catalytic sites are hosted primarily by the beta subunits. This chain is ATP synthase subunit beta, found in Lactobacillus acidophilus (strain ATCC 700396 / NCK56 / N2 / NCFM).